The following is a 293-amino-acid chain: MEIRRRPPNPKVKVANLEYAIPHEESEPRNILEKIVWEKDREVELARHRLPLPKLIAKIEKLSDTKNFLQTLKDSVTSPAVIAEIKKASPSRGLIREDFKPGDIAIAYQKGGATCLSVLTDKTFFQGGFDVLADVRKIIDIPLLCKDFILHPYQIYQARASGADAILLIAAILSDQDLMYLNKIALSLGLSILVEVHDAAELNRVLRLGGFPLIGINNRDLKTFETDLTTTCKVATECSNLLKEQDVLLVSESGIFTREDLQKVASFGASAVLIGESLMRQKDLTNALKELIG.

The protein belongs to the TrpC family.

The catalysed reaction is 1-(2-carboxyphenylamino)-1-deoxy-D-ribulose 5-phosphate + H(+) = (1S,2R)-1-C-(indol-3-yl)glycerol 3-phosphate + CO2 + H2O. Its pathway is amino-acid biosynthesis; L-tryptophan biosynthesis; L-tryptophan from chorismate: step 4/5. This Prochlorococcus marinus (strain SARG / CCMP1375 / SS120) protein is Indole-3-glycerol phosphate synthase.